A 193-amino-acid polypeptide reads, in one-letter code: Ion-translocating oxidoreductase complex subunit A (193 aa).

A run of 6 helical transmembrane segments spans residues 5–25, 39–59, 67–87, 102–122, 134–154, and 171–191; these read LLLL…FLGL, IGMG…SYLV, LGIE…VVQF, VLGI…VALL, IIYG…FSAM, and SIAM…TGLV.

This sequence belongs to the NqrDE/RnfAE family. As to quaternary structure, the complex is composed of six subunits: RnfA, RnfB, RnfC, RnfD, RnfE and RnfG.

It localises to the cell inner membrane. In terms of biological role, part of a membrane-bound complex that couples electron transfer with translocation of ions across the membrane. This is Ion-translocating oxidoreductase complex subunit A from Aliivibrio fischeri (strain ATCC 700601 / ES114) (Vibrio fischeri).